Reading from the N-terminus, the 461-residue chain is Phytase PHO112 (461 aa).

Cystine bridges form between Cys-62–Cys-384, Cys-261–Cys-274, and Cys-404–Cys-412. Residues Arg-72, His-73, Arg-76, and Ser-79 each contribute to the 1D-myo-inositol hexakisphosphate site. The Nucleophile role is filled by His-73. N-linked (GlcNAc...) asparagine glycans are attached at residues Asn-97 and Asn-157. Arg-169 lines the 1D-myo-inositol hexakisphosphate pocket. N-linked (GlcNAc...) asparagine glycans are attached at residues Asn-229 and Asn-248. Lys-293 contacts 1D-myo-inositol hexakisphosphate. 2 N-linked (GlcNAc...) asparagine glycosylation sites follow: Asn-302 and Asn-313. His-334 and Asp-335 together coordinate 1D-myo-inositol hexakisphosphate. Asn-437 and Asn-452 each carry an N-linked (GlcNAc...) asparagine glycan.

It belongs to the histidine acid phosphatase family. Monomer.

It localises to the secreted. The catalysed reaction is 1D-myo-inositol hexakisphosphate + H2O = 1D-myo-inositol 1,2,4,5,6-pentakisphosphate + phosphate. It carries out the reaction 1D-myo-inositol 1,2,4,5,6-pentakisphosphate + H2O = 1D-myo-inositol 1,2,5,6-tetrakisphosphate + phosphate. It catalyses the reaction 1D-myo-inositol 1,2,5,6-tetrakisphosphate + H2O = 1D-myo-inositol 1,2,6-trisphosphate + phosphate. The enzyme catalyses 1D-myo-inositol 1,2,6-trisphosphate + H2O = 1D-myo-inositol 1,2-bisphosphate + phosphate. The catalysed reaction is 1D-myo-inositol 1,2-bisphosphate + H2O = 1D-myo-inositol 2-phosphate + phosphate. Functionally, catalyzes the phosphate monoester hydrolysis of phytic acid (myo-inositol hexakisphosphate), which results in the stepwise formation of myo-inositol pentakis-, tetrakis-, tris-, bis-, and monophosphates, as well as the liberation of inorganic phosphate. Myo-inositol 2-monophosphate is the end product. Responsible of about 25% of the phytase activity. The residual phytase activity might be contributed by other cytosolic or cellular enzymes such as acid phosphatase that also degraded the substrate phytate. Is essential for human tissue damage during infection. This is Phytase PHO112 (PHO112) from Candida albicans (strain SC5314 / ATCC MYA-2876) (Yeast).